We begin with the raw amino-acid sequence, 908 residues long: Hyphal wall protein 2 (908 aa).

An N-terminal signal peptide occupies residues 1-20; sequence MRFATTQLATLACFILTAEA. Low complexity-rich tracts occupy residues 110–187, 266–324, and 332–405; these read PKTA…TTSK, ESTT…TMKH, and HATT…KSST. Disordered stretches follow at residues 110–221 and 263–477; these read PKTA…PSKT and TETE…IPKY. Residues 406-416 show a composition bias toward polar residues; sequence PASTLEYSTSI. Over residues 422 to 477 the composition is skewed to low complexity; sequence TTSNSLSTKSTTLTTISRSSTSGSSVPNTTRESSTSTTTPNSSSSESKVSSAIPKY. N-linked (GlcNAc...) asparagine glycans are attached at residues Asn449, Asn462, and Asn519. Low complexity predominate over residues 539 to 608; sequence GTTVRSSTSE…TSTTTPESSP (70 aa). Positions 539–700 are disordered; it reads GTTVRSSTSE…TSASETSSGS (162 aa). The span at 624-638 shows a compositional bias: polar residues; it reads TMESSASTTKNSSIQ. N-linked (GlcNAc...) asparagine glycosylation occurs at Asn634. Low complexity-rich tracts occupy residues 639–655 and 662–677; these read STSEATTSGSSGVESSV and SSVPVTTSEWSSVVTT. N-linked (GlcNAc...) asparagine glycosylation is present at Asn684. Over residues 685 to 700 the composition is skewed to low complexity; it reads TTLEHSTSASETSSGS. Asn764 carries an N-linked (GlcNAc...) asparagine glycan. The disordered stretch occupies residues 821–844; sequence VSTDVKPTTSSQGTKSTPVDTDSK. Gly887 carries GPI-anchor amidated glycine lipidation. A propeptide spans 888–908 (removed in mature form); sequence TGNNMKLSFGVVIAGVAAFAI.

Post-translationally, the GPI-anchor is attached to the protein in the endoplasmic reticulum and serves to target the protein to the cell surface. There, the glucosamine-inositol phospholipid moiety is cleaved off and the GPI-modified mannoprotein is covalently attached via its lipidless GPI glycan remnant to the 1,6-beta-glucan of the outer cell wall layer.

The protein resides in the secreted. It is found in the cell wall. The protein localises to the membrane. GPI-anchored cell wall protein required for mating efficiency, biofilm formation, adhesion, filamentous growth, and oxidative stress tolerance. Involved in normal disseminated infection in a mouse systemic candidiasis model. This Candida albicans (strain SC5314 / ATCC MYA-2876) (Yeast) protein is Hyphal wall protein 2 (HWP2).